Here is an 843-residue protein sequence, read N- to C-terminus: Protein P (843 aa).

The interval 1–177 (MPLSYPHFRK…FCGSPYSWEQ (177 aa)) is terminal protein domain (TP). A spacer region spans residues 178–346 (ELQHGSTSIN…YCLSHIINLL (169 aa)). Disordered regions lie at residues 202 to 221 (SGIL…FQQS) and 285 to 310 (TNPS…VPPG). The tract at residues 347 to 690 (EDWGPCYEHG…YMNLYPVARQ (344 aa)) is polymerase/reverse transcriptase domain (RT). Residues 357–600 (QHHIRTPRTP…YTLNFMGYVI (244 aa)) enclose the Reverse transcriptase domain. The Mg(2+) site is built by D429, D551, and D552.

The protein belongs to the hepadnaviridae P protein family.

The enzyme catalyses DNA(n) + a 2'-deoxyribonucleoside 5'-triphosphate = DNA(n+1) + diphosphate. It carries out the reaction Endonucleolytic cleavage to 5'-phosphomonoester.. Activated by host HSP70 and HSP40 in vitro to be able to bind the epsilon loop of the pgRNA. Because deletion of the RNase H region renders the protein partly chaperone-independent, the chaperones may be needed indirectly to relieve occlusion of the RNA-binding site by this domain. Inhibited by several reverse-transcriptase inhibitors: Lamivudine, Adefovir and Entecavir. Functionally, multifunctional enzyme that converts the viral RNA genome into dsDNA in viral cytoplasmic capsids. This enzyme displays a DNA polymerase activity that can copy either DNA or RNA templates, and a ribonuclease H (RNase H) activity that cleaves the RNA strand of RNA-DNA heteroduplexes in a partially processive 3'- to 5'-endonucleasic mode. Neo-synthesized pregenomic RNA (pgRNA) are encapsidated together with the P protein, and reverse-transcribed inside the nucleocapsid. Initiation of reverse-transcription occurs first by binding the epsilon loop on the pgRNA genome, and is initiated by protein priming, thereby the 5'-end of (-)DNA is covalently linked to P protein. Partial (+)DNA is synthesized from the (-)DNA template and generates the relaxed circular DNA (RC-DNA) genome. After budding and infection, the RC-DNA migrates in the nucleus, and is converted into a plasmid-like covalently closed circular DNA (cccDNA). The activity of P protein does not seem to be necessary for cccDNA generation, and is presumably released from (+)DNA by host nuclear DNA repair machinery. The chain is Protein P from Hepatitis B virus genotype F1 (isolate Argentina/sa11/2000) (HBV-F).